The following is an 885-amino-acid chain: Alanine--tRNA ligase (885 aa).

Zn(2+) is bound by residues histidine 564, histidine 568, cysteine 676, and histidine 680.

Belongs to the class-II aminoacyl-tRNA synthetase family. It depends on Zn(2+) as a cofactor.

The protein localises to the cytoplasm. It carries out the reaction tRNA(Ala) + L-alanine + ATP = L-alanyl-tRNA(Ala) + AMP + diphosphate. Catalyzes the attachment of alanine to tRNA(Ala) in a two-step reaction: alanine is first activated by ATP to form Ala-AMP and then transferred to the acceptor end of tRNA(Ala). Also edits incorrectly charged Ser-tRNA(Ala) and Gly-tRNA(Ala) via its editing domain. The chain is Alanine--tRNA ligase from Brucella anthropi (strain ATCC 49188 / DSM 6882 / CCUG 24695 / JCM 21032 / LMG 3331 / NBRC 15819 / NCTC 12168 / Alc 37) (Ochrobactrum anthropi).